A 557-amino-acid chain; its full sequence is Dihydroxy-acid dehydratase (557 aa).

Position 78 (D78) interacts with Mg(2+). A [2Fe-2S] cluster-binding site is contributed by C119. 2 residues coordinate Mg(2+): D120 and K121. K121 carries the N6-carboxylysine modification. C192 serves as a coordination point for [2Fe-2S] cluster. E446 is a binding site for Mg(2+). S472 functions as the Proton acceptor in the catalytic mechanism.

This sequence belongs to the IlvD/Edd family. Homodimer. [2Fe-2S] cluster serves as cofactor. Requires Mg(2+) as cofactor.

It carries out the reaction (2R)-2,3-dihydroxy-3-methylbutanoate = 3-methyl-2-oxobutanoate + H2O. It catalyses the reaction (2R,3R)-2,3-dihydroxy-3-methylpentanoate = (S)-3-methyl-2-oxopentanoate + H2O. It participates in amino-acid biosynthesis; L-isoleucine biosynthesis; L-isoleucine from 2-oxobutanoate: step 3/4. The protein operates within amino-acid biosynthesis; L-valine biosynthesis; L-valine from pyruvate: step 3/4. In terms of biological role, functions in the biosynthesis of branched-chain amino acids. Catalyzes the dehydration of (2R,3R)-2,3-dihydroxy-3-methylpentanoate (2,3-dihydroxy-3-methylvalerate) into 2-oxo-3-methylpentanoate (2-oxo-3-methylvalerate) and of (2R)-2,3-dihydroxy-3-methylbutanoate (2,3-dihydroxyisovalerate) into 2-oxo-3-methylbutanoate (2-oxoisovalerate), the penultimate precursor to L-isoleucine and L-valine, respectively. This is Dihydroxy-acid dehydratase from Campylobacter curvus (strain 525.92).